The following is a 202-amino-acid chain: FMN reductase (NADH) RutF 1 (202 aa).

A disordered region spans residues 168–202 (PRTPRSGSAPAEPARAPRAVGARPAEGPALALRSA). The segment covering 171 to 196 (PRSGSAPAEPARAPRAVGARPAEGPA) has biased composition (low complexity).

It belongs to the non-flavoprotein flavin reductase family. RutF subfamily.

The catalysed reaction is FMNH2 + NAD(+) = FMN + NADH + 2 H(+). Catalyzes the reduction of FMN to FMNH2 which is used to reduce pyrimidine by RutA via the Rut pathway. The polypeptide is FMN reductase (NADH) RutF 1 (Methylorubrum extorquens (strain PA1) (Methylobacterium extorquens)).